A 349-amino-acid polypeptide reads, in one-letter code: tRNA pseudouridine synthase D (349 aa).

Phenylalanine 26 provides a ligand contact to substrate. Aspartate 79 acts as the Nucleophile in catalysis. Asparagine 128 contributes to the substrate binding site. The TRUD domain maps to 154 to 302 (GVPNYFGEQR…VEGCRRAILV (149 aa)). Substrate is bound at residue phenylalanine 328.

The protein belongs to the pseudouridine synthase TruD family.

It carries out the reaction uridine(13) in tRNA = pseudouridine(13) in tRNA. Its function is as follows. Responsible for synthesis of pseudouridine from uracil-13 in transfer RNAs. In Photorhabdus laumondii subsp. laumondii (strain DSM 15139 / CIP 105565 / TT01) (Photorhabdus luminescens subsp. laumondii), this protein is tRNA pseudouridine synthase D.